The following is a 155-amino-acid chain: Ribosome maturation factor RimP (155 aa).

This sequence belongs to the RimP family.

The protein resides in the cytoplasm. Functionally, required for maturation of 30S ribosomal subunits. The protein is Ribosome maturation factor RimP of Synechococcus sp. (strain WH7803).